A 38-amino-acid polypeptide reads, in one-letter code: Histone H5 (38 aa).

Residues 1–15 (TESPIPVPAPAPAAK) show a composition bias toward pro residues. The segment at 1 to 38 (TESPIPVPAPAPAAKPKPKRVSKRPASHPPYSDMIAAA) is disordered. Basic residues predominate over residues 16–26 (PKPKRVSKRPA).

This sequence belongs to the histone H1/H5 family. In terms of tissue distribution, erythroid cells.

It is found in the nucleus. The protein resides in the chromosome. In terms of biological role, histone H5 performs the same function as H1, being necessary for the condensation of nucleosome chains into higher order structures, and replaces histone H1 in certain cells. The chain is Histone H5 from Columba livia (Rock dove).